Here is an 827-residue protein sequence, read N- to C-terminus: Multiple RNA-binding domain-containing protein 1 (827 aa).

The RRM 1 domain maps to 5-78 (SRIFVKNLPP…SRISVDIAKP (74 aa)). Disordered regions lie at residues 77 to 116 (KPIA…TAAA), 176 to 230 (AGLE…ATDD), and 256 to 299 (AASG…DPES). A compositionally biased stretch (acidic residues) spans 179–189 (EDGESDDEYED). Composition is skewed to low complexity over residues 208 to 225 (APLA…PVSL) and 256 to 270 (AASG…STSV). Positions 277-288 (KPEEHPAEDSRE) are enriched in basic and acidic residues. 4 RRM domains span residues 308–384 (SRLF…PAAA), 489–560 (TTIL…KGPK), 599–682 (SSLF…ASHR), and 704–781 (TKLV…FAQA).

This sequence belongs to the RRM MRD1 family.

The protein localises to the nucleus. Functionally, involved in pre-rRNA processing. The polypeptide is Multiple RNA-binding domain-containing protein 1 (mrd-1) (Neurospora crassa (strain ATCC 24698 / 74-OR23-1A / CBS 708.71 / DSM 1257 / FGSC 987)).